The following is a 445-amino-acid chain: Phosphoglucosamine mutase (445 aa).

Catalysis depends on Ser102, which acts as the Phosphoserine intermediate. Residues Ser102, Asp241, Asp243, and Asp245 each contribute to the Mg(2+) site. Ser102 carries the post-translational modification Phosphoserine.

It belongs to the phosphohexose mutase family. The cofactor is Mg(2+). Post-translationally, activated by phosphorylation.

It carries out the reaction alpha-D-glucosamine 1-phosphate = D-glucosamine 6-phosphate. Its function is as follows. Catalyzes the conversion of glucosamine-6-phosphate to glucosamine-1-phosphate. The polypeptide is Phosphoglucosamine mutase (Haemophilus influenzae (strain PittEE)).